The chain runs to 125 residues: Small ribosomal subunit protein bS6 (125 aa).

Residues 96–125 (ETGASSMMKTVEREEARKASQAEFAAANER) form a disordered region. Positions 105–115 (TVEREEARKAS) are enriched in basic and acidic residues.

Belongs to the bacterial ribosomal protein bS6 family.

Functionally, binds together with bS18 to 16S ribosomal RNA. This Paracidovorax citrulli (strain AAC00-1) (Acidovorax citrulli) protein is Small ribosomal subunit protein bS6.